Reading from the N-terminus, the 642-residue chain is Zinc finger protein 14 (642 aa).

The 73-residue stretch at 4 to 76 (VSFEDVAVNF…MVERLCESRK (73 aa)) folds into the KRAB domain. Residues 77-99 (GSKCGETTSQMPNVNINKETSTG) form a disordered region. Polar residues predominate over residues 81–99 (GETTSQMPNVNINKETSTG). The C2H2-type 1 zinc-finger motif lies at 103-125 (HECSFCGKDFMHHSSLNRHMRSH). The segment at 141–163 (CKRKAVGKTFSYRHCVRKHERTH) adopts a C2H2-type 2; degenerate zinc-finger fold. The segment at 169 to 191 (YECKQCGKAFIYYQPFQRHERIH) adopts a C2H2-type 3 zinc-finger fold. The C2H2-type 4; atypical zinc-finger motif lies at 197-217 (YECKQCGKTFIYYQSFQKHAH). 15 C2H2-type zinc fingers span residues 223-245 (YECK…ERTH), 251-273 (YECK…ERTH), 279-301 (YKCK…KRTH), 307-329 (YECK…VITH), 335-357 (YKCK…ERTH), 363-385 (YECK…ERTH), 391-413 (YECK…ETTH), 419-441 (YECK…ERTH), 447-469 (YECK…ERSH), 475-497 (YECK…ERTH), 503-525 (YECK…EKIH), 531-553 (FECK…ERTH), 559-581 (YQCK…ERTH), 587-609 (YRCK…ERSH), and 615-637 (YECK…ERTH).

Belongs to the krueppel C2H2-type zinc-finger protein family.

The protein resides in the nucleus. In terms of biological role, may be involved in transcriptional regulation. In Macaca fascicularis (Crab-eating macaque), this protein is Zinc finger protein 14 (ZNF14).